Consider the following 436-residue polypeptide: MTQLQSLRGMVDLLPEQTRCWQAVESVARDHFRRAGLQEIRTPLLEVTELFARGIGEATDVVGKEMYTFVDRGDRSCTLRPEGTASVVRAALQHGLLSQGPQRFWYGGPMFRYERPQAGRQRQFYQIGVEYLGVGSPRSDAEVIALAWALLVDLGVQGLVLEINSLGTLQDRQKYREELVAWLEARSEELDDDSRKRLYTNPLRILDSKHPAIKELLQDAPTLFEALSVESKARFEEVQVDLEALQIPFQLNPRLVRGLDYYGHTAFEITSDQLGAQATVCGGGRYDGLVEQLGGAPTPAFGWAFGMERLMLLLEAAASINPSGSAARLRASTRPDLYVVNRGEQAERVALVIAHQLRAAGLVVELDSSGAAFNKQFKRAGRSRATWALVIGDDEAERGEGRLKYLQEAKTQANPTPIDKLHRLDDVTGLVCLVRE.

Belongs to the class-II aminoacyl-tRNA synthetase family. In terms of assembly, homodimer.

The protein resides in the cytoplasm. The catalysed reaction is tRNA(His) + L-histidine + ATP = L-histidyl-tRNA(His) + AMP + diphosphate + H(+). This is Histidine--tRNA ligase from Prochlorococcus marinus (strain MIT 9313).